The primary structure comprises 515 residues: Zinc-binding protein AdcA (515 aa).

Positions 1–28 are cleaved as a signal peptide; the sequence is MKKKILLMMSLISVFFAWQLTQAKQVLA. Histidine 66 contributes to the Zn(2+) binding site. The segment at 126–148 is disordered; it reads HHHEEADKKHEHNKHSEEGHNHA. The his-rich loop stretch occupies residues 129–148; the sequence is EEADKKHEHNKHSEEGHNHA. The Zn(2+) site is built by histidine 152, histidine 216, and glutamate 291.

The protein belongs to the bacterial solute-binding protein 9 family.

Functionally, part of the ATP-binding cassette (ABC) transport system AdcABC involved in zinc import. Binds zinc with high affinity and specificity and delivers it to the membrane permease for translocation into the cytoplasm. The sequence is that of Zinc-binding protein AdcA (adcA) from Streptococcus pyogenes serotype M3 (strain ATCC BAA-595 / MGAS315).